We begin with the raw amino-acid sequence, 84 residues long: Seminal ribonuclease (84 aa).

Cystine bridges form between Cys10-Cys65, Cys28-Cys80, and Cys35-Cys42. Residues 11–15 (KPVNT), Lys36, and Arg55 contribute to the substrate site.

It belongs to the pancreatic ribonuclease family. In terms of assembly, homodimer; disulfide-linked.

The protein resides in the secreted. The enzyme catalyses an [RNA] containing cytidine + H2O = an [RNA]-3'-cytidine-3'-phosphate + a 5'-hydroxy-ribonucleotide-3'-[RNA].. The catalysed reaction is an [RNA] containing uridine + H2O = an [RNA]-3'-uridine-3'-phosphate + a 5'-hydroxy-ribonucleotide-3'-[RNA].. The protein is Seminal ribonuclease (SRN) of Giraffa camelopardalis (Giraffe).